A 113-amino-acid chain; its full sequence is Histidine triad nucleotide-binding protein (113 aa).

Positions 5 and 8 each coordinate Zn(2+). Positions 6 to 113 (IFCKIAQKQI…GGKKLAWDKL (108 aa)) constitute an HIT domain. Asp31 provides a ligand contact to AMP. His47 contributes to the Zn(2+) binding site. Asn86, Gly92, and Thr94 together coordinate AMP. His97 is a Zn(2+) binding site. The Histidine triad motif motif lies at 97-101 (HIHFH). 2 residues coordinate AMP: His99 and His101. His99 serves as the catalytic Tele-AMP-histidine intermediate.

This sequence belongs to the HINT family.

Its subcellular location is the nucleus. It localises to the cytoplasm. The catalysed reaction is adenosine 5'-phosphoramidate + H2O = AMP + NH4(+). Functionally, hydrolyzes purine nucleotide phosphoramidates with a single phosphate group, including adenosine 5'monophosphoramidate (AMP-NH2), adenosine 5'monophosphomorpholidate (AMP-morpholidate) and guanosine 5'monophosphomorpholidate (GMP-morpholidate). Hydrolyzes lysyl-AMP (AMP-N-epsilon-(N-alpha-acetyl lysine methyl ester)) generated by lysine tRNA ligase, as well as Met-AMP, His-AMP and Asp-AMP, lysyl-GMP (GMP-N-epsilon-(N-alpha-acetyl lysine methyl ester)) and AMP-N-alanine methyl ester. May also function as scaffolding protein that mediates protein-protein interactions. This is Histidine triad nucleotide-binding protein from Entamoeba histolytica (strain ATCC 30459 / HM-1:IMSS / ABRM).